A 367-amino-acid polypeptide reads, in one-letter code: D-alanine--D-alanine ligase (367 aa).

The ATP-grasp domain occupies 145 to 351; that stretch reads KRLLRDAGLP…QPALMDALIA (207 aa). Residue 174 to 229 coordinates ATP; sequence HAVGCSELFIKPANLGSSVGISKARTPQEFAAACDLALRFDGKILIERCISPVREI. 3 residues coordinate Mg(2+): aspartate 306, glutamate 318, and asparagine 320.

This sequence belongs to the D-alanine--D-alanine ligase family. Mg(2+) serves as cofactor. Mn(2+) is required as a cofactor.

Its subcellular location is the cytoplasm. It catalyses the reaction 2 D-alanine + ATP = D-alanyl-D-alanine + ADP + phosphate + H(+). It participates in cell wall biogenesis; peptidoglycan biosynthesis. Cell wall formation. This is D-alanine--D-alanine ligase from Bradyrhizobium sp. (strain BTAi1 / ATCC BAA-1182).